A 576-amino-acid polypeptide reads, in one-letter code: MIALPVEKAPRKSLWQRHRAFISGIVALIIIGTFFLTSGLHPAPPHEAKRPHHGKGPMHSPKCEKIEPLSPSFKHSVDTILHDPAFRNSSIEKLSNAVRIPTVVQDKNPNPADDPDFYKHFYELHDYFEKTFPNIHKHLKLEKVNELGLLYTWEGSDPDLKPLLLMAHQDVVPVNNETLSSWKFPPFSGHYDPETDFVWGRGSNDCKNLLIAEFEAIEQLLIDGFKPNRTIVMSLGFDEEASGTLGAASLASFLHERYGDDGIYSIIDEGEGIMEVDKDVFVATPINAEKGYVDFEVSILGHGGHSSVPPDHTTIGIASELITEFEANPFDYEFEFDNPIYGLLTCAAEHSKSLSKDVKKTILGAPFCPRRKDKLVEYISNQSHLRSLIRTTQAVDIINGGVKANALPETTRFLINHRINLHSSVAEVFERNIEYAKKIAEKYGYGLSKNGDDYIIPETELGHIDITLLRELEPAPLSPSSGPVWDILAGTIQDVFENGVLQNNEEFYVTTGLFSGNTDTKYYWNLSKNIYRFVGSIIDIDLLKTLHSVNEHVDVPGHLSAIAFVYEYIVNVNEYA.

Topologically, residues 1-19 (MIALPVEKAPRKSLWQRHR) are cytoplasmic. K8 participates in a covalent cross-link: Glycyl lysine isopeptide (Lys-Gly) (interchain with G-Cter in ubiquitin). The helical transmembrane segment at 20–40 (AFISGIVALIIIGTFFLTSGL) threads the bilayer. Residues 41–576 (HPAPPHEAKR…EYIVNVNEYA (536 aa)) lie on the Lumenal side of the membrane. A disordered region spans residues 44–65 (PPHEAKRPHHGKGPMHSPKCEK). Residue N88 is glycosylated (N-linked (GlcNAc...) asparagine). A Zn(2+)-binding site is contributed by H168. The active site involves D170. The N-linked (GlcNAc...) asparagine glycan is linked to N176. D205 contacts Zn(2+). N228 is a glycosylation site (N-linked (GlcNAc...) asparagine). Catalysis depends on E239, which acts as the Proton acceptor. Residues E240 and D268 each contribute to the Zn(2+) site. N-linked (GlcNAc...) asparagine glycans are attached at residues N381 and N525. H547 is a Zn(2+) binding site.

It belongs to the peptidase M20A family. As to quaternary structure, yscS is synthesized as one polypeptide chain precursor which after carbohydrate modification in the secretory pathway yields two active precursor molecules. The proteolytically unprocessed forms are associated with the membrane, whereas the mature forms of the enzyme are soluble. Zn(2+) is required as a cofactor. Post-translationally, glycosylated. Ubiquitinated. Ubiquitination mediates sorting into internal vesicles in late endosomes. TUL1 is required for ubiquitination.

It localises to the vacuole membrane. The enzyme catalyses Release of a C-terminal amino acid from a peptide in which glycine is the penultimate amino acid, e.g. Z-Gly-|-Leu.. Functionally, necessary for use of certain peptides as sole nitrogen source. May also cleave intracellularly generated peptides to recycle amino acids for protein synthesis. This is Carboxypeptidase S (CPS1) from Saccharomyces cerevisiae (strain ATCC 204508 / S288c) (Baker's yeast).